The primary structure comprises 352 residues: UDP-N-acetylglucosamine--N-acetylmuramyl-(pentapeptide) pyrophosphoryl-undecaprenol N-acetylglucosamine transferase 2 (352 aa).

Residues 11–13 (SAG), Arg164, Ser194, and Gln289 contribute to the UDP-N-acetyl-alpha-D-glucosamine site.

Belongs to the glycosyltransferase 28 family. MurG subfamily.

It localises to the cell membrane. It catalyses the reaction di-trans,octa-cis-undecaprenyl diphospho-N-acetyl-alpha-D-muramoyl-L-alanyl-D-glutamyl-meso-2,6-diaminopimeloyl-D-alanyl-D-alanine + UDP-N-acetyl-alpha-D-glucosamine = di-trans,octa-cis-undecaprenyl diphospho-[N-acetyl-alpha-D-glucosaminyl-(1-&gt;4)]-N-acetyl-alpha-D-muramoyl-L-alanyl-D-glutamyl-meso-2,6-diaminopimeloyl-D-alanyl-D-alanine + UDP + H(+). It functions in the pathway cell wall biogenesis; peptidoglycan biosynthesis. Cell wall formation. Catalyzes the transfer of a GlcNAc subunit on undecaprenyl-pyrophosphoryl-MurNAc-pentapeptide (lipid intermediate I) to form undecaprenyl-pyrophosphoryl-MurNAc-(pentapeptide)GlcNAc (lipid intermediate II). The chain is UDP-N-acetylglucosamine--N-acetylmuramyl-(pentapeptide) pyrophosphoryl-undecaprenol N-acetylglucosamine transferase 2 from Bacillus cereus (strain ATCC 10987 / NRS 248).